The sequence spans 241 residues: 15,16-dihydrobiliverdin:ferredoxin oxidoreductase (241 aa).

The protein belongs to the HY2 family.

The enzyme catalyses 15,16-dihydrobiliverdin + oxidized 2[4Fe-4S]-[ferredoxin] = biliverdin IXalpha + reduced 2[4Fe-4S]-[ferredoxin] + 2 H(+). Functionally, catalyzes the two-electron reduction of biliverdin IX-alpha at the C15 methine bridge. The sequence is that of 15,16-dihydrobiliverdin:ferredoxin oxidoreductase (pebA) from Prochlorococcus marinus (strain SARG / CCMP1375 / SS120).